Reading from the N-terminus, the 351-residue chain is UDP-N-acetylglucosamine--N-acetylmuramyl-(pentapeptide) pyrophosphoryl-undecaprenol N-acetylglucosamine transferase (351 aa).

Residues Thr-13–Gly-15, Asn-125, Arg-161, Ser-189, Ile-241, Ala-260–Glu-265, and Gln-285 contribute to the UDP-N-acetyl-alpha-D-glucosamine site.

This sequence belongs to the glycosyltransferase 28 family. MurG subfamily.

Its subcellular location is the cell inner membrane. The catalysed reaction is di-trans,octa-cis-undecaprenyl diphospho-N-acetyl-alpha-D-muramoyl-L-alanyl-D-glutamyl-meso-2,6-diaminopimeloyl-D-alanyl-D-alanine + UDP-N-acetyl-alpha-D-glucosamine = di-trans,octa-cis-undecaprenyl diphospho-[N-acetyl-alpha-D-glucosaminyl-(1-&gt;4)]-N-acetyl-alpha-D-muramoyl-L-alanyl-D-glutamyl-meso-2,6-diaminopimeloyl-D-alanyl-D-alanine + UDP + H(+). Its pathway is cell wall biogenesis; peptidoglycan biosynthesis. In terms of biological role, cell wall formation. Catalyzes the transfer of a GlcNAc subunit on undecaprenyl-pyrophosphoryl-MurNAc-pentapeptide (lipid intermediate I) to form undecaprenyl-pyrophosphoryl-MurNAc-(pentapeptide)GlcNAc (lipid intermediate II). The protein is UDP-N-acetylglucosamine--N-acetylmuramyl-(pentapeptide) pyrophosphoryl-undecaprenol N-acetylglucosamine transferase of Haemophilus influenzae (strain ATCC 51907 / DSM 11121 / KW20 / Rd).